The chain runs to 356 residues: Putative mitogen-activated protein kinase 14C (356 aa).

One can recognise a Protein kinase domain in the interval 20–305; the sequence is YEFVRFLGGG…AAEAMLHPYL (286 aa). ATP is bound by residues 26 to 34 and lysine 49; that span reads LGGGSFGQV. The Proton acceptor role is filled by aspartate 147. Residue threonine 177 is modified to Phosphothreonine.

This sequence belongs to the protein kinase superfamily. CMGC Ser/Thr protein kinase family. MAP kinase subfamily. The cofactor is Mg(2+). The phosphorylation on Thr-177 activates the enzyme. A conserved Tyr, which must also be phosphorylated to activate the enzyme in closely related sequences, is replaced by His-179 in this sequence.

The catalysed reaction is L-seryl-[protein] + ATP = O-phospho-L-seryl-[protein] + ADP + H(+). It carries out the reaction L-threonyl-[protein] + ATP = O-phospho-L-threonyl-[protein] + ADP + H(+). In terms of biological role, kinase involved in a signal transduction pathway. This is Putative mitogen-activated protein kinase 14C (p38c) from Drosophila melanogaster (Fruit fly).